Consider the following 424-residue polypeptide: Serine--tRNA ligase (424 aa).

Residue 231–233 (TAE) coordinates L-serine. 262 to 264 (RSE) lines the ATP pocket. Glutamate 285 contributes to the L-serine binding site. 349-352 (EISS) is a binding site for ATP. Serine 385 is a binding site for L-serine.

It belongs to the class-II aminoacyl-tRNA synthetase family. Type-1 seryl-tRNA synthetase subfamily. As to quaternary structure, homodimer. The tRNA molecule binds across the dimer.

The protein resides in the cytoplasm. The catalysed reaction is tRNA(Ser) + L-serine + ATP = L-seryl-tRNA(Ser) + AMP + diphosphate + H(+). It carries out the reaction tRNA(Sec) + L-serine + ATP = L-seryl-tRNA(Sec) + AMP + diphosphate + H(+). It functions in the pathway aminoacyl-tRNA biosynthesis; selenocysteinyl-tRNA(Sec) biosynthesis; L-seryl-tRNA(Sec) from L-serine and tRNA(Sec): step 1/1. In terms of biological role, catalyzes the attachment of serine to tRNA(Ser). Is also able to aminoacylate tRNA(Sec) with serine, to form the misacylated tRNA L-seryl-tRNA(Sec), which will be further converted into selenocysteinyl-tRNA(Sec). This chain is Serine--tRNA ligase, found in Marinobacter nauticus (strain ATCC 700491 / DSM 11845 / VT8) (Marinobacter aquaeolei).